Here is a 163-residue protein sequence, read N- to C-terminus: Lysosomal enzyme trafficking factor (163 aa).

2 helical membrane passes run M40–F60 and L98–L118.

It belongs to the LYSET family. Interacts with GNPTAB; this interaction is important for proper localization of GNPTAB in Golgi stacks. Interacts with MBTPS1.

The protein resides in the golgi apparatus membrane. Its function is as follows. Required for mannose-6-phosphate-dependent trafficking of lysosomal enzymes. LYSET bridges GlcNAc-1-phosphate transferase (GNPTAB), to the membrane-bound transcription factor site-1 protease (MBTPS1), thus allowing proteolytic activation of the GNPTAB. GNPTAB is involved in the regulation of M6P-dependent Golgi-to-lysosome trafficking of lysosomal enzymes. LYSET is thus an essential factor for maturation and delivery of lysosomal hydrolases. Plays an essential function for cells that depend on lysosomal catabolism to generate nutrients. The polypeptide is Lysosomal enzyme trafficking factor (Lyset) (Mus musculus (Mouse)).